The primary structure comprises 311 residues: HPr kinase/phosphorylase (311 aa).

Catalysis depends on residues His140 and Lys161. Gly155–Ser162 lines the ATP pocket. Ser162 contributes to the Mg(2+) binding site. Asp179 functions as the Proton acceptor; for phosphorylation activity. Proton donor; for dephosphorylation activity in the catalytic mechanism. Residues Ile203 to Asp212 are important for the catalytic mechanism of both phosphorylation and dephosphorylation. Residue Glu204 participates in Mg(2+) binding. The active site involves Arg245. Positions Pro266 to Arg271 are important for the catalytic mechanism of dephosphorylation.

This sequence belongs to the HPrK/P family. In terms of assembly, homohexamer. The cofactor is Mg(2+).

It catalyses the reaction [HPr protein]-L-serine + ATP = [HPr protein]-O-phospho-L-serine + ADP + H(+). The enzyme catalyses [HPr protein]-O-phospho-L-serine + phosphate + H(+) = [HPr protein]-L-serine + diphosphate. Catalyzes the ATP- as well as the pyrophosphate-dependent phosphorylation of a specific serine residue in HPr, a phosphocarrier protein of the phosphoenolpyruvate-dependent sugar phosphotransferase system (PTS). HprK/P also catalyzes the pyrophosphate-producing, inorganic phosphate-dependent dephosphorylation (phosphorolysis) of seryl-phosphorylated HPr (P-Ser-HPr). The two antagonistic activities of HprK/P are regulated by several intracellular metabolites, which change their concentration in response to the absence or presence of rapidly metabolisable carbon sources (glucose, fructose, etc.) in the growth medium. Therefore, by controlling the phosphorylation state of HPr, HPrK/P is a sensor enzyme that plays a major role in the regulation of carbon metabolism and sugar transport: it mediates carbon catabolite repression (CCR), and regulates PTS-catalyzed carbohydrate uptake and inducer exclusion. The polypeptide is HPr kinase/phosphorylase (hprK) (Enterococcus faecalis (strain ATCC 700802 / V583)).